A 123-amino-acid polypeptide reads, in one-letter code: uncharacterized protein (123 aa).

The disordered stretch occupies residues 35–100 (SQDHGDDPAE…SSGAPASQHC (66 aa)). Over residues 37 to 48 (DHGDDPAERGRT) the composition is skewed to basic and acidic residues. Residues 85–97 (ALPASPSSGAPAS) show a composition bias toward low complexity.

This is an uncharacterized protein from Homo sapiens (Human).